Consider the following 1208-residue polypeptide: Lysine-specific demethylase JMJ17 (1208 aa).

The PHD-type 1; degenerate zinc finger occupies 1-36; the sequence is MLLCDSCNKGWHIYCLSPPLKHIPLGNWYCLECLNT. Residues cysteine 4, cysteine 7, cysteine 30, and cysteine 33 each contribute to the Zn(2+) site. A JmjC domain is found at 126–292; it reads EYCGSPWNLN…YGGSGAELYR (167 aa). Fe cation contacts are provided by histidine 172, glutamate 174, and histidine 260. Zn(2+) is bound by residues cysteine 369, cysteine 372, cysteine 383, cysteine 385, cysteine 392, histidine 395, cysteine 400, and cysteine 402. The segment at 369 to 421 adopts a C5HC2 zinc-finger fold; it reads CIICQQFLHLSAIVCNCRPSVFACLEHWKHLCECEPTKLRLEYRYTLAELDMM. Positions 613-620 match the Nuclear localization signal motif; the sequence is SKKISSAK. A PHD-type 2 zinc finger spans residues 1099 to 1145; it reads MLHCICLKPYNSRSMVSCSQCGEWYHTYCLKLHWRPKAYVCSACCPL. Zn(2+)-binding residues include cysteine 1102, cysteine 1104, cysteine 1116, cysteine 1119, histidine 1124, cysteine 1127, cysteine 1139, and cysteine 1142.

This sequence belongs to the JARID1 histone demethylase family. It depends on Fe(2+) as a cofactor. Expressed in inflorescences, roots, seedlings and siliques, and, at low levels, in leaves and stems.

The protein localises to the nucleus. It carries out the reaction N(6),N(6),N(6)-trimethyl-L-lysyl(4)-[histone H3] + 2-oxoglutarate + O2 = N(6),N(6)-dimethyl-L-lysyl(4)-[histone H3] + formaldehyde + succinate + CO2. The catalysed reaction is N(6),N(6)-dimethyl-L-lysyl(4)-[histone H3] + 2-oxoglutarate + O2 = N(6)-methyl-L-lysyl(4)-[histone H3] + formaldehyde + succinate + CO2. It catalyses the reaction N(6)-methyl-L-lysyl(4)-[histone H3] + 2-oxoglutarate + O2 = L-lysyl(4)-[histone H3] + formaldehyde + succinate + CO2. The enzyme catalyses N(6),N(6),N(6)-trimethyl-L-lysyl(4)-[histone H3] + 3 2-oxoglutarate + 3 O2 = L-lysyl(4)-[histone H3] + 3 formaldehyde + 3 succinate + 3 CO2. Functions as a histone H3 'Lys-4' (H3K4me) demethylase involved in the regulation of gene expression. Active on H3K4me1, H3K4me2 and H3K4me3. Repressor of the abscisic acid (ABA) signaling pathway, especially during stomatal closure regulation. Negative regulator of responses to dehydration stress by binding directly to the chromatin of SRK2E/OST1 and demethylating H3K4me3 to regulates its expression. Together with JMJ14 and JMJ16, required for plant growth and development. The chain is Lysine-specific demethylase JMJ17 from Arabidopsis thaliana (Mouse-ear cress).